The following is a 607-amino-acid chain: F-box protein At-B (607 aa).

The F-box domain occupies 9–47 (LAEEILKRLDLENLCSVACVSTTLRSAVVSGVLPSLTSL). 16 LRR repeats span residues 51–76 (VFSP…TLNC), 77–99 (LRLN…HLLR), 100–125 (CSLL…TLEM), 130–155 (SPDV…QLNI), 228–253 (LDLI…DLED), 262–286 (DNDL…SLVR), 295–320 (FKRI…RLGG), 321–346 (FPKV…EVRG), 347–372 (AFLL…RLST), 373–397 (CPLI…DLGS), 398–422 (CKSI…NLAG), 424–447 (DVTD…SLRG), 448–477 (CRRV…DLGH), 478–503 (MPGI…SIRS), 504–536 (CFHV…NVHN), and 537–563 (CVSL…GMGQ).

In Arabidopsis thaliana (Mouse-ear cress), this protein is F-box protein At-B (ATB).